The primary structure comprises 420 residues: 3-phosphoshikimate 1-carboxyvinyltransferase (420 aa).

3-phosphoshikimate is bound by residues Lys20, Ser21, and Arg25. Lys20 contacts phosphoenolpyruvate. Residue Arg119 coordinates phosphoenolpyruvate. 7 residues coordinate 3-phosphoshikimate: Ser161, Ser162, Gln163, Ser189, Asp303, Gln326, and Lys330. A phosphoenolpyruvate-binding site is contributed by Gln163. Catalysis depends on Asp303, which acts as the Proton acceptor. 3 residues coordinate phosphoenolpyruvate: Arg334, Arg375, and Lys400.

Belongs to the EPSP synthase family. As to quaternary structure, monomer.

The protein resides in the cytoplasm. It catalyses the reaction 3-phosphoshikimate + phosphoenolpyruvate = 5-O-(1-carboxyvinyl)-3-phosphoshikimate + phosphate. Its pathway is metabolic intermediate biosynthesis; chorismate biosynthesis; chorismate from D-erythrose 4-phosphate and phosphoenolpyruvate: step 6/7. Its function is as follows. Catalyzes the transfer of the enolpyruvyl moiety of phosphoenolpyruvate (PEP) to the 5-hydroxyl of shikimate-3-phosphate (S3P) to produce enolpyruvyl shikimate-3-phosphate and inorganic phosphate. The chain is 3-phosphoshikimate 1-carboxyvinyltransferase from Dehalococcoides mccartyi (strain ATCC BAA-2100 / JCM 16839 / KCTC 5957 / BAV1).